The sequence spans 161 residues: MSLYQSIVFIARNVVNSITRILHDHPTNSSLITQTYFITPNHSGKNISFHLFHDFKYCSADTRHYSQLIIFPVKENSRPTQVSRPLGGRPHESVFLPKFTRTQNSYCLTRLDRMGFPPPRKASTIMHFFQDDRTVMCSPKDGIPVSSFHIMICFLERRKGN.

This is an uncharacterized protein from Saccharomyces cerevisiae (strain ATCC 204508 / S288c) (Baker's yeast).